A 283-amino-acid chain; its full sequence is Pantothenate synthetase (283 aa).

30–37 is a binding site for ATP; sequence MGCLHEGH. Histidine 37 (proton donor) is an active-site residue. Residue glutamine 61 coordinates (R)-pantoate. Glutamine 61 is a binding site for beta-alanine. 147-150 is a binding site for ATP; that stretch reads GQKD. A (R)-pantoate-binding site is contributed by glutamine 153. ATP is bound by residues valine 176 and 184 to 187; that span reads KSSR.

This sequence belongs to the pantothenate synthetase family. Homodimer.

Its subcellular location is the cytoplasm. It catalyses the reaction (R)-pantoate + beta-alanine + ATP = (R)-pantothenate + AMP + diphosphate + H(+). The protein operates within cofactor biosynthesis; (R)-pantothenate biosynthesis; (R)-pantothenate from (R)-pantoate and beta-alanine: step 1/1. In terms of biological role, catalyzes the condensation of pantoate with beta-alanine in an ATP-dependent reaction via a pantoyl-adenylate intermediate. This is Pantothenate synthetase from Clostridium novyi (strain NT).